The sequence spans 269 residues: Iron(3+)-hydroxamate import ATP-binding protein FhuC (269 aa).

The region spanning 4-240 is the ABC transporter domain; sequence LSTEQLGIGY…DILKQVFQID (237 aa). Residues 36–43 and 160–171 contribute to the ATP site; these read GPNGCGKS and LLLLDEPTTYLD.

The protein belongs to the ABC transporter superfamily. Iron (Fe3+)-hydroxamate importer (TC 3.A.1.14.7) family. In terms of assembly, the complex is composed of an ATP-binding protein (FhuC), two transmembrane proteins (FhuB and FhuG) and a solute-binding protein (FhuD or YxeB).

The protein resides in the cell membrane. The catalysed reaction is ATP + H2O + Fe(3+)-hydroxamate complex-[hydroxamate-binding protein]Side 1 = ADP + phosphate + Fe(3+)-hydroxamate complexSide 2 + [hydroxamate-binding protein]Side 1.. Functionally, part of the ABC transporter complex FhuBGCD involved in iron(3+)-hydroxamate import. Responsible for energy coupling to the transport system. The protein is Iron(3+)-hydroxamate import ATP-binding protein FhuC (fhuC) of Bacillus subtilis (strain 168).